A 591-amino-acid chain; its full sequence is Probable sulfoacetaldehyde acetyltransferase (591 aa).

The segment at 359 to 383 (MDHEDDDPGTEWNVGARQREPDRMS) is disordered.

This sequence belongs to the TPP enzyme family. Mg(2+) serves as cofactor. It depends on thiamine diphosphate as a cofactor.

It localises to the cytoplasm. The enzyme catalyses acetyl phosphate + sulfite + H(+) = sulfoacetaldehyde + phosphate. It functions in the pathway organosulfur degradation; taurine degradation via aerobic pathway; acetyl phosphate and sulfite from taurine: step 2/2. The protein is Probable sulfoacetaldehyde acetyltransferase (xsc) of Rhizobium meliloti (strain 1021) (Ensifer meliloti).